A 75-amino-acid chain; its full sequence is Large ribosomal subunit protein bL31 (75 aa).

This sequence belongs to the bacterial ribosomal protein bL31 family. Type A subfamily. In terms of assembly, part of the 50S ribosomal subunit.

Its function is as follows. Binds the 23S rRNA. The chain is Large ribosomal subunit protein bL31 from Chlorobium phaeovibrioides (strain DSM 265 / 1930) (Prosthecochloris vibrioformis (strain DSM 265)).